A 94-amino-acid chain; its full sequence is MLKVNEYFDGNVKSIGFEQKGDKATVGVMEAGHYQFNTAAPERMTVVKGALTIQLADEDEWHTYEQGQSFDVAGHSSFKLEVKTPTAYLCEFLD.

Belongs to the nucleoside phosphorylase PpnP family.

The enzyme catalyses a purine D-ribonucleoside + phosphate = a purine nucleobase + alpha-D-ribose 1-phosphate. The catalysed reaction is adenosine + phosphate = alpha-D-ribose 1-phosphate + adenine. It catalyses the reaction cytidine + phosphate = cytosine + alpha-D-ribose 1-phosphate. It carries out the reaction guanosine + phosphate = alpha-D-ribose 1-phosphate + guanine. The enzyme catalyses inosine + phosphate = alpha-D-ribose 1-phosphate + hypoxanthine. The catalysed reaction is thymidine + phosphate = 2-deoxy-alpha-D-ribose 1-phosphate + thymine. It catalyses the reaction uridine + phosphate = alpha-D-ribose 1-phosphate + uracil. It carries out the reaction xanthosine + phosphate = alpha-D-ribose 1-phosphate + xanthine. In terms of biological role, catalyzes the phosphorolysis of diverse nucleosides, yielding D-ribose 1-phosphate and the respective free bases. Can use uridine, adenosine, guanosine, cytidine, thymidine, inosine and xanthosine as substrates. Also catalyzes the reverse reactions. This Aeromonas hydrophila subsp. hydrophila (strain ATCC 7966 / DSM 30187 / BCRC 13018 / CCUG 14551 / JCM 1027 / KCTC 2358 / NCIMB 9240 / NCTC 8049) protein is Pyrimidine/purine nucleoside phosphorylase.